Here is a 110-residue protein sequence, read N- to C-terminus: Protein P2 (110 aa).

A compositionally biased stretch (polar residues) spans 72–82 (KLPTTSGSSSA). Residues 72–110 (KLPTTSGSSSAGAIVPAGSNTQGQYKAPPKKGIKRKYPA) form a disordered region. Residues 99 to 110 (PPKKGIKRKYPA) are compositionally biased toward basic residues.

This is Protein P2 from Oryza sativa (Rice).